The sequence spans 476 residues: UPF0481 protein At3g47200 (476 aa).

The interval 1–24 is disordered; it reads MADKTDIISSSSDKASPPPPSAFR. A run of 2 helical transmembrane segments spans residues 133–153 and 439–459; these read LMFM…IMSG and AVLF…LSYL.

It belongs to the UPF0481 family.

The protein resides in the membrane. This chain is UPF0481 protein At3g47200, found in Arabidopsis thaliana (Mouse-ear cress).